The chain runs to 522 residues: Subtilisin-like protease 10 (522 aa).

The signal sequence occupies residues 1 to 19 (MFFFKGVVAVLSFFSAVNA). A propeptide spanning residues 20–117 (APFMKPNNGT…VERDQIGTSQ (98 aa)) is cleaved from the precursor. Residues 36–113 (SYIVLLKRDI…HVAHVERDQI (78 aa)) form the Inhibitor I9 domain. Residues 127–405 (NWGLGRLSNN…KLLVNGANGT (279 aa)) enclose the Peptidase S8 domain. Catalysis depends on charge relay system residues Asp-159 and His-190. The N-linked (GlcNAc...) asparagine glycan is linked to Asn-251. Catalysis depends on Ser-348, which acts as the Charge relay system. Positions 384-397 (ASVKNPGPNTTNKL) are enriched in polar residues. Residues 384-515 (ASVKNPGPNT…GWNRPMWWNR (132 aa)) form a disordered region. Asn-392 and Asn-403 each carry an N-linked (GlcNAc...) asparagine glycan. Positions 432–459 (SQNPPPGQNPPPGQNPPPEQPAPSPPAN) are enriched in pro residues.

It belongs to the peptidase S8 family.

The protein resides in the secreted. Its function is as follows. Secreted subtilisin-like serine protease with keratinolytic activity that contributes to pathogenicity. The sequence is that of Subtilisin-like protease 10 (SUB10) from Arthroderma benhamiae (strain ATCC MYA-4681 / CBS 112371) (Trichophyton mentagrophytes).